The chain runs to 1666 residues: Latent-transforming growth factor beta-binding protein 4 (1666 aa).

The first 24 residues, 1–24 (MRRPGLGGPCPLLLLLLLPAATSA), serve as a signal peptide directing secretion. The EGF-like 1 domain maps to 148-180 (ARVLCPLICHNGGVCVKPDRCLCPPDFAGKFCQ). 6 disulfides stabilise this stretch: Cys-152/Cys-162, Cys-156/Cys-168, Cys-170/Cys-179, Cys-288/Cys-310, Cys-297/Cys-323, and Cys-311/Cys-326. The TB 1 domain maps to 286-338 (GYCFRELRGSECASPLPGLRTQEVCCRGEGLAWGVHDCHPCAEHLRNSNQVSG). Asn-351 carries N-linked (GlcNAc...) asparagine glycosylation. In terms of domain architecture, EGF-like 2; calcium-binding spans 356–396 (DVDECATGGRCQHGECANTRGGYTCVCPDGFLLDSSRSSCI). 7 disulfides stabilise this stretch: Cys-360–Cys-371, Cys-366–Cys-380, Cys-382–Cys-395, Cys-408–Cys-430, Cys-417–Cys-443, Cys-431–Cys-446, and Cys-432–Cys-458. One can recognise a TB 2 domain in the interval 406 to 458 (GPCYRVLHDGGCSLPILRNITKQICCCSRVGKAWGRGCQLCPPYGSEGFREIC). N-linked (GlcNAc...) asparagine glycosylation is present at Asn-424. Positions 473–590 (YNTRPLNQDP…EIPESGPSSS (118 aa)) are disordered. A compositionally biased stretch (pro residues) spans 491–502 (RVPPATPRPPTG). Residues 521–561 (PRPRPEPRPRPESRPRPEPRPRPEPRPQPESQPRPESRPRP) are compositionally biased toward basic and acidic residues. Residues 562–573 (ESQPWPEFPLPS) are compositionally biased toward pro residues. Over residues 579–590 (GPEIPESGPSSS) the composition is skewed to low complexity. The EGF-like 3 domain maps to 588–629 (SSSMCQRNPQVCGPGRCVPRPSGYTCACDPGFRLGPQGTRCI). 30 cysteine pairs are disulfide-bonded: Cys-592/Cys-604, Cys-599/Cys-613, Cys-615/Cys-628, Cys-634/Cys-646, Cys-641/Cys-655, Cys-657/Cys-670, Cys-676/Cys-688, Cys-683/Cys-697, Cys-699/Cys-712, Cys-718/Cys-730, Cys-725/Cys-739, Cys-741/Cys-750, Cys-757/Cys-769, Cys-764/Cys-778, Cys-780/Cys-793, Cys-799/Cys-811, Cys-806/Cys-820, Cys-822/Cys-835, Cys-881/Cys-893, Cys-887/Cys-902, Cys-904/Cys-918, Cys-924/Cys-936, Cys-930/Cys-945, Cys-947/Cys-960, Cys-966/Cys-977, Cys-972/Cys-986, Cys-988/Cys-1001, Cys-1095/Cys-1107, Cys-1101/Cys-1116, and Cys-1118/Cys-1131. Residues 630 to 671 (DIDECRRVPTPCAPGRCENTPGSFRCVCGTGFQAGPRATECL) enclose the EGF-like 4; calcium-binding domain. One can recognise an EGF-like 5; calcium-binding domain in the interval 672-713 (DVDECRRVPPPCDRGRCENTPGSFLCVCPAGYQAAPHGASCQ). The EGF-like 6; calcium-binding domain occupies 714 to 751 (DVDECTQSPGLCGRGVCENLPGSFRCVCPAGFRGSACE). The EGF-like 7; calcium-binding domain occupies 753–794 (DVDECAQQPPPCGPGRCDNTAGSFHCACPAGFRSRGPGAPCQ). In terms of domain architecture, EGF-like 8; calcium-binding spans 795–836 (DVDECSRSPSPCAYGRCENTEGSFKCVCPTGFQPNAAGSECE). The EGF-like 9; calcium-binding domain occupies 877 to 919 (DVDECSSGTPCGLHGQCTNTKGSFHCSCSTGYRAPSGQPGPCA). The region spanning 920–961 (DINECLEGDFCFPHGECLNTDGSFTCTCAPGYRPGPRGASCL) is the EGF-like 10; calcium-binding domain. In terms of domain architecture, EGF-like 11; calcium-binding spans 962 to 1002 (DVDECSEEDLCQSGICTNTDGSFECICPPGHRAGPDLASCL). The region spanning 1091-1132 (DVDECRNRSFCGAHAMCQNLPGSFQCVCDQGYEGARDGRHCV) is the EGF-like 12; calcium-binding domain. The N-linked (GlcNAc...) asparagine glycan is linked to Asn-1097. Positions 1171–1221 (TGRCVPPRAPAGTFPGSQPQAPASPSLPARPPAPPPPRRPSPPRQGPVSSG) are disordered. Positions 1185–1197 (PGSQPQAPASPSL) are enriched in low complexity. A compositionally biased stretch (pro residues) spans 1198-1215 (PARPPAPPPPRRPSPPRQ). Positions 1223–1277 (RECYFDTAAPDACDNILARNVTWQECCCTVGEGWGSGCRIQQCPGTETAEYQSLC) constitute a TB 3 domain. 10 cysteine pairs are disulfide-bonded: Cys-1225/Cys-1248, Cys-1235/Cys-1260, Cys-1249/Cys-1265, Cys-1250/Cys-1277, Cys-1299/Cys-1312, Cys-1307/Cys-1321, Cys-1323/Cys-1336, Cys-1342/Cys-1354, Cys-1349/Cys-1363, and Cys-1365/Cys-1378. Residue Asn-1242 is glycosylated (N-linked (GlcNAc...) asparagine). Residues 1295-1337 (DVDECQLFQDQVCKSGVCVNTAPGYSCYCSNGFYYHAHRLECV) form the EGF-like 13; calcium-binding domain. The region spanning 1338-1379 (DNDECADEEPACEGGRCVNTVGSYHCTCEPPLVLDGSRRRCV) is the EGF-like 14; calcium-binding domain. Asn-1381 carries N-linked (GlcNAc...) asparagine glycosylation. The TB 4 domain occupies 1391-1444 (GVCWQEVGPDLVCSRPRLDRQATYTECCCLYGEAWGMDCALCPAQDSDDFEALC). Cystine bridges form between Cys-1393–Cys-1417, Cys-1403–Cys-1429, Cys-1418–Cys-1432, and Cys-1419–Cys-1444. A compositionally biased stretch (pro residues) spans 1488–1500 (VLPYDPYPPPPGP). A disordered region spans residues 1488–1566 (VLPYDPYPPP…SSERGSYTGA (79 aa)). The residue at position 1564 (Thr-1564) is a Phosphothreonine. 2 EGF-like domains span residues 1575 to 1615 (EAEE…MSCV) and 1616 to 1660 (DVNE…HHCA). Disulfide bonds link Cys-1579/Cys-1590, Cys-1585/Cys-1599, Cys-1601/Cys-1614, Cys-1620/Cys-1635, Cys-1630/Cys-1644, and Cys-1646/Cys-1659.

It belongs to the LTBP family. As to quaternary structure, forms part of the large latent transforming growth factor beta precursor complex; removal is essential for activation of complex. Interacts with LTBP1 and TGFB1. Interacts with EFEMP2; this interaction promotes fibrillar deposition of EFEMP2. Contains hydroxylated asparagine residues.

It is found in the secreted. It localises to the extracellular space. Its subcellular location is the extracellular matrix. In terms of biological role, key regulator of transforming growth factor beta (TGFB1, TGFB2 and TGFB3) that controls TGF-beta activation by maintaining it in a latent state during storage in extracellular space. Associates specifically via disulfide bonds with the Latency-associated peptide (LAP), which is the regulatory chain of TGF-beta, and regulates integrin-dependent activation of TGF-beta. The polypeptide is Latent-transforming growth factor beta-binding protein 4 (Ltbp4) (Mus musculus (Mouse)).